The following is a 309-amino-acid chain: Branched-chain-amino-acid aminotransferase (309 aa).

The residue at position 160 (Lys-160) is an N6-(pyridoxal phosphate)lysine.

This sequence belongs to the class-IV pyridoxal-phosphate-dependent aminotransferase family. Homohexamer. Requires pyridoxal 5'-phosphate as cofactor.

It carries out the reaction L-leucine + 2-oxoglutarate = 4-methyl-2-oxopentanoate + L-glutamate. The catalysed reaction is L-isoleucine + 2-oxoglutarate = (S)-3-methyl-2-oxopentanoate + L-glutamate. The enzyme catalyses L-valine + 2-oxoglutarate = 3-methyl-2-oxobutanoate + L-glutamate. It functions in the pathway amino-acid biosynthesis; L-isoleucine biosynthesis; L-isoleucine from 2-oxobutanoate: step 4/4. Its pathway is amino-acid biosynthesis; L-leucine biosynthesis; L-leucine from 3-methyl-2-oxobutanoate: step 4/4. The protein operates within amino-acid biosynthesis; L-valine biosynthesis; L-valine from pyruvate: step 4/4. Functionally, acts on leucine, isoleucine and valine. This Salmonella typhi protein is Branched-chain-amino-acid aminotransferase (ilvE).